The chain runs to 209 residues: Kynurenine formamidase (209 aa).

Trp20 contacts substrate. Residues His50, His54, and Asp56 each contribute to the Zn(2+) site. His60 functions as the Proton donor/acceptor in the catalytic mechanism. His161 and Glu173 together coordinate Zn(2+).

The protein belongs to the Cyclase 1 superfamily. KynB family. In terms of assembly, homodimer. Requires Zn(2+) as cofactor.

The enzyme catalyses N-formyl-L-kynurenine + H2O = L-kynurenine + formate + H(+). It functions in the pathway amino-acid degradation; L-tryptophan degradation via kynurenine pathway; L-kynurenine from L-tryptophan: step 2/2. Catalyzes the hydrolysis of N-formyl-L-kynurenine to L-kynurenine, the second step in the kynurenine pathway of tryptophan degradation. The polypeptide is Kynurenine formamidase (Bacillus cereus (strain ATCC 14579 / DSM 31 / CCUG 7414 / JCM 2152 / NBRC 15305 / NCIMB 9373 / NCTC 2599 / NRRL B-3711)).